The chain runs to 343 residues: Probable siderophore transport system permease protein YfhA (343 aa).

Helical transmembrane passes span 15–35 (WIVFLVLLGLTAAVLIISAGL), 69–89 (ILTALCAGVCLAAAGAILQGL), 97–117 (PDIIGITGGAAVAVVLLMMFF), 130–150 (WLPAAAFIGASAVGLIVYLLA), 160–180 (LVLIGIGFSMSAQAMTTLLMI), 204–224 (QHVKIAIILSVILLFICFVAL), 249–269 (FFLLLLSTALTGCAVSVAGTI), 289–309 (GALLPASALIGALLVLTADIV), and 317–337 (VEVPAGVFTAAIGAPYFIYLL).

The protein belongs to the binding-protein-dependent transport system permease family. FecCD subfamily. In terms of assembly, the complex is composed of one ATP-binding protein (YusV), two transmembrane proteins (YfiZ and YfhA) and a solute-binding protein (YfiY).

It localises to the cell membrane. In terms of biological role, part of the ABC transporter complex YfiYZ/YfhA/YusV involved in import of the iron-hydroxamate siderophores schizokinen, arthrobactin and corprogen. In Bacillus subtilis (strain 168), this protein is Probable siderophore transport system permease protein YfhA (yfhA).